We begin with the raw amino-acid sequence, 258 residues long: Undecaprenyl-diphosphatase (258 aa).

8 helical membrane-spanning segments follow: residues 14-34 (AAGE…PWLL), 39-59 (QGLT…LIYF), 79-99 (GKIL…GVLF), 106-126 (VFRS…ILHL), 136-156 (VALN…ALMP), 176-196 (AESA…AAVL), 209-229 (AFIA…KFLM), and 237-257 (FNIF…TALM).

The protein belongs to the UppP family.

It is found in the cell membrane. It carries out the reaction di-trans,octa-cis-undecaprenyl diphosphate + H2O = di-trans,octa-cis-undecaprenyl phosphate + phosphate + H(+). Functionally, catalyzes the dephosphorylation of undecaprenyl diphosphate (UPP). Confers resistance to bacitracin. This chain is Undecaprenyl-diphosphatase, found in Elusimicrobium minutum (strain Pei191).